A 210-amino-acid polypeptide reads, in one-letter code: Large ribosomal subunit protein uL4 (210 aa).

The disordered stretch occupies residues 49 to 76 (HCTKTRSEVSGGGKKPWRQKHTGRARHG). The segment covering 63–76 (KPWRQKHTGRARHG) has biased composition (basic residues).

The protein belongs to the universal ribosomal protein uL4 family. In terms of assembly, part of the 50S ribosomal subunit.

Its function is as follows. One of the primary rRNA binding proteins, this protein initially binds near the 5'-end of the 23S rRNA. It is important during the early stages of 50S assembly. It makes multiple contacts with different domains of the 23S rRNA in the assembled 50S subunit and ribosome. In terms of biological role, forms part of the polypeptide exit tunnel. In Thermodesulfovibrio yellowstonii (strain ATCC 51303 / DSM 11347 / YP87), this protein is Large ribosomal subunit protein uL4.